The primary structure comprises 597 residues: Coronatine-insensitive protein homolog 1b (597 aa).

The region spanning 22-64 (SIPEEALHLVLGYVDDPRDREAVSLVCRRWHRIDALTRKHVTV) is the F-box domain. Residues arginine 92, arginine 353, tyrosine 391, arginine 414, and arginine 501 each contribute to the jasmonate site.

Interacts with TIFY10C/JAZ8 in a coronatine-dependent manner. Interacts with TIFY3/JAZ1, TIFY6A/JAZ3, TIFY6B/JAZ4, TIFY10A/JAZ6, TIFY10B/JAZ7, TIFY11A/JAZ9, TIFY11B/JAZ10, TIFY11C/JAZ11 and TIFY11D/JAZ12 in a coronatine-dependent manner. In terms of tissue distribution, expressed in roots, shoots, leaf sheaths and leaf blades.

In terms of biological role, involved in jasmonate (JA) signaling. Required for jasmonate signaling in plant defense responses. Can complement Arabidopsis coi1-1 mutant and restore jasmonate signaling. Component of SCF(COI1) E3 ubiquitin ligase complexes, which may mediate the ubiquitination and subsequent proteasomal degradation of target proteins, including TIFY/JAZ family. The chain is Coronatine-insensitive protein homolog 1b from Oryza sativa subsp. japonica (Rice).